The following is a 44-amino-acid chain: Phycoerythrin alpha-1 chain (44 aa).

Positions 1–44 (AMDKSAKAPQITIFDHRGCSRAPKSETGGTATKDDQMMVKVSQV) are disordered. Lys4 is modified (5-hydroxylysine). Residues Cys19 and Arg21 each contribute to the 15,16-dihydrobiliverdin site. Residues 24-26 (KSE) are 15,16-dihydrobiliverdin chromophore. Lys40 serves as a coordination point for 15,16-dihydrobiliverdin.

This sequence belongs to the phycoerythrin family. As to quaternary structure, heterotetramer of 2 different alpha chains and 2 identical beta chains. The subunit composition could comprise of any combination of 2 out of 4 different alpha units with an invariant beta unit. Contains one covalently linked 15,16-dihydrobiliverdin chromophore.

It localises to the plastid. It is found in the chloroplast thylakoid membrane. Light-harvesting photosynthetic tetrapyrrole chromophore-protein from the phycobiliprotein complex. The protein is Phycoerythrin alpha-1 chain (cpeA1) of Rhodomonas sp. (strain CS 24) (Chroomonas sp. (strain CS24)).